The following is a 743-amino-acid chain: Amylovoran biosynthesis protein AmsF (743 aa).

Positions 1-27 (MKRRELIRTAFSTIVATAALSSVSARA) are cleaved as a signal peptide.

This sequence to R.meliloti ExoP.

The protein resides in the periplasm. Its pathway is glycan metabolism; exopolysaccharide biosynthesis. Involved in the biosynthesis of amylovoran which functions as a virulence factor. May be involved in the polymerization or late modification of the repeating units. This chain is Amylovoran biosynthesis protein AmsF (amsF), found in Erwinia amylovora (Fire blight bacteria).